The sequence spans 239 residues: Uridylate kinase (239 aa).

13–16 is a binding site for ATP; sequence KVSG. A UMP-binding site is contributed by G55. G56 and R60 together coordinate ATP. UMP contacts are provided by residues D75 and 136–143; that span reads TGNPFCTT. ATP contacts are provided by T163, Q164, Y169, and D172.

It belongs to the UMP kinase family. In terms of assembly, homohexamer.

Its subcellular location is the cytoplasm. The enzyme catalyses UMP + ATP = UDP + ADP. Its pathway is pyrimidine metabolism; CTP biosynthesis via de novo pathway; UDP from UMP (UMPK route): step 1/1. Inhibited by UTP. Functionally, catalyzes the reversible phosphorylation of UMP to UDP. The protein is Uridylate kinase of Rickettsia bellii (strain RML369-C).